Reading from the N-terminus, the 246-residue chain is Probable transcriptional regulatory protein CLK_2466 (246 aa).

Belongs to the TACO1 family.

Its subcellular location is the cytoplasm. This Clostridium botulinum (strain Loch Maree / Type A3) protein is Probable transcriptional regulatory protein CLK_2466.